The primary structure comprises 256 residues: ATP-dependent dethiobiotin synthetase BioD (256 aa).

13–18 (EVGKTY) lines the ATP pocket. Position 17 (threonine 17) interacts with Mg(2+). Lysine 38 is a catalytic residue. Position 42 (serine 42) interacts with substrate. ATP is bound by residues aspartate 56, 118–121 (EGAG), and 187–188 (NR). The Mg(2+) site is built by aspartate 56 and glutamate 118.

This sequence belongs to the dethiobiotin synthetase family. In terms of assembly, homodimer. It depends on Mg(2+) as a cofactor.

It is found in the cytoplasm. It carries out the reaction (7R,8S)-7,8-diammoniononanoate + CO2 + ATP = (4R,5S)-dethiobiotin + ADP + phosphate + 3 H(+). The protein operates within cofactor biosynthesis; biotin biosynthesis; biotin from 7,8-diaminononanoate: step 1/2. In terms of biological role, catalyzes a mechanistically unusual reaction, the ATP-dependent insertion of CO2 between the N7 and N8 nitrogen atoms of 7,8-diaminopelargonic acid (DAPA, also called 7,8-diammoniononanoate) to form a ureido ring. This Rhodopirellula baltica (strain DSM 10527 / NCIMB 13988 / SH1) protein is ATP-dependent dethiobiotin synthetase BioD.